We begin with the raw amino-acid sequence, 1229 residues long: ABC transporter B family member 3 (1229 aa).

A helical transmembrane segment spans residues 22 to 42 (VLLMIVGSIGAIGNGVGFPLM). Residues 25–313 (MIVGSIGAIG…TTPCLTAFAA (289 aa)) enclose the ABC transmembrane type-1 1 domain. A glycan (N-linked (GlcNAc...) asparagine) is linked at N56. 5 consecutive transmembrane segments (helical) span residues 73-93 (FVYL…CWMI), 149-169 (FIQL…KGWL), 172-192 (LVML…PIIV), 252-272 (GLGL…AIWF), and 281-301 (GYTG…SMSL). Residues 348-584 (IELRDVCFSY…HEGAYAQLIR (237 aa)) form the ABC transporter 1 domain. Residue 383–390 (GESGSGKS) participates in ATP binding. The N-linked (GlcNAc...) asparagine glycan is linked to N450. Residues 594-606 (RLESSNELRDRSI) are compositionally biased toward basic and acidic residues. The disordered stretch occupies residues 594 to 614 (RLESSNELRDRSINRGSSRNI). Residue N645 is glycosylated (N-linked (GlcNAc...) asparagine). Transmembrane regions (helical) follow at residues 661–681 (ILIL…IFGI) and 706–726 (MIFV…TYLF). Positions 662–949 (LILGTLLGAV…ASSFAPDSSK (288 aa)) constitute an ABC transmembrane type-1 2 domain. An N-linked (GlcNAc...) asparagine glycan is attached at N758. 3 consecutive transmembrane segments (helical) span residues 797–817 (IIAF…IPLI), 888–908 (GVGF…CFYV), and 923–943 (VFQV…ASSF). Residues 984–1222 (IELCHISFTY…EGGVYASLVQ (239 aa)) form the ABC transporter 2 domain. ATP is bound at residue 1019–1026 (GESGSGKS). Residues N1073 and N1173 are each glycosylated (N-linked (GlcNAc...) asparagine).

It belongs to the ABC transporter superfamily. ABCB family. Multidrug resistance exporter (TC 3.A.1.201) subfamily.

The protein localises to the membrane. The protein is ABC transporter B family member 3 (ABCB3) of Arabidopsis thaliana (Mouse-ear cress).